Consider the following 213-residue polypeptide: Thymidylate kinase (213 aa).

9–16 (GVEGCGKT) contributes to the ATP binding site.

The protein belongs to the thymidylate kinase family.

It carries out the reaction dTMP + ATP = dTDP + ADP. Its function is as follows. Phosphorylation of dTMP to form dTDP in both de novo and salvage pathways of dTTP synthesis. This chain is Thymidylate kinase, found in Geotalea uraniireducens (strain Rf4) (Geobacter uraniireducens).